Reading from the N-terminus, the 187-residue chain is Threonylcarbamoyl-AMP synthase (187 aa).

In terms of domain architecture, YrdC-like spans 3–187; the sequence is EVLPADVAEL…AKSGQVIRKG (185 aa).

This sequence belongs to the SUA5 family. TsaC subfamily.

The protein localises to the cytoplasm. It catalyses the reaction L-threonine + hydrogencarbonate + ATP = L-threonylcarbamoyladenylate + diphosphate + H2O. In terms of biological role, required for the formation of a threonylcarbamoyl group on adenosine at position 37 (t(6)A37) in tRNAs that read codons beginning with adenine. Catalyzes the conversion of L-threonine, HCO(3)(-)/CO(2) and ATP to give threonylcarbamoyl-AMP (TC-AMP) as the acyladenylate intermediate, with the release of diphosphate. The sequence is that of Threonylcarbamoyl-AMP synthase from Shewanella halifaxensis (strain HAW-EB4).